The primary structure comprises 443 residues: Zinc finger protein 713 (443 aa).

Polar residues predominate over residues 1–10 (MPSQNAVFSQ). Disordered stretches follow at residues 1–23 (MPSQNAVFSQEGNMEEEEMNDGS) and 99–118 (DTHPDGENRPEIKKSTTSQN). Residues 32–102 (LTFQDVAVDF…ERDSLLDTHP (71 aa)) form the KRAB domain. The segment covering 99–112 (DTHPDGENRPEIKK) has biased composition (basic and acidic residues). The C2H2-type 1; degenerate zinc-finger motif lies at 255–280 (HTAEKPSECGKAFSHTSSLSQPQMLL). 5 C2H2-type zinc fingers span residues 286–308 (YKCDECGKRFSQRIHLIQHQRIH), 314–336 (FICNGCGKAFRQHSSFTQHLRIH), 342–364 (YKCNQCGKAFSRITSLTEHHRLH), 370–392 (YECGFCGKAFSQRTHLNQHERTH), and 398–420 (YKCNECGKAFSQSAHLNQHRKIH).

It belongs to the krueppel C2H2-type zinc-finger protein family. As to expression, expressed in fetal and adult brain.

The protein localises to the nucleus. May be involved in transcriptional regulation. The protein is Zinc finger protein 713 of Homo sapiens (Human).